The following is a 706-amino-acid chain: MSCVHNNTSFPVQTEAYLKEVFEKYKELQESKDTSLTARFARALKYYQFLIYTAFSDPKFGIGQGENTRGLLIYHQMGMGKTILSLSLAISLSHIYNPILIAPKSLHSNFQQSLLKLIKLLYPETTDHSKELQKISRRFRFVSLDAYNMGQQIIKAGGSLNGCLLIVDEAHNLFRGIINSANDKTNARQLYNNIMQAKNIRILFLTGTPCSKDPFEMVPCFNMLSGRILLPLHYERFYTAYVNKTTNSPLNADKLLNRLVGMISYAGNQNELNKLFPTELPLIIEKVEMSPEQYRQYLLARDVENAEKHASSGMYEKINAAALCLPGSEQESGSSYYVRSRMISIFASEMLTVKEDEKLSEAVQQLPKEAFTENSSPKIVCMLKNIKTSPGPVLIYSQFVELGLHVVARFLEIEGYQCLQPLKVLEEGHNTILLHKDGKDLMVKNFAEDGPTRTLVLSSKITRFTLITGKILSKERDMIQQLWNSPLNIHGEVIKILLVSKTGAEGLDLKYGRQVHILEPYWDKAREDQVKARIIRIGSHDALPPEEKTVQPFLYIAVANQKMFYSIPEGSQEQKTIDERFHERGLEKSHLNSAFRDLLKRAAIECAFNGESGCLMCQPTNALLFHENFERDLRLPNPCQPLVKAEVKAYSISYEGKQFFYQKNKDVGLGYTFYEYNPIIKAYIEIKPSNPLYIKLIKHVQAGTTA.

The Helicase ATP-binding domain occupies 62–227 (IGQGENTRGL…VPCFNMLSGR (166 aa)). 75–82 (HQMGMGKT) is a binding site for ATP. A DEAH box motif is present at residues 168–171 (DEAH). Residues 417–599 (QCLQPLKVLE…HLNSAFRDLL (183 aa)) enclose the Helicase C-terminal domain.

Belongs to the DEAD box helicase family. DEAH subfamily. As to quaternary structure, part of the viral DNA-directed RNA polymerase that consists of 8 polII-like subunits (RPB1, RPB2, RPB3, RPB5, RPB6, RPB7, RPB9, RPB10), a capping enzyme and a termination factor.

It is found in the virion. Its function is as follows. Putative DNA-dependent ATPase required for providing the needed energy to achieve the termination of early transcripts. The protein is Termination factor NPH-I homolog of African swine fever virus (isolate Warthog/Namibia/Wart80/1980) (ASFV).